Consider the following 95-residue polypeptide: Beta-defensin 132 (95 aa).

The first 22 residues, 1 to 22 (MKFLLLVLAALRFLTQVIPASA), serve as a signal peptide directing secretion. 3 disulfides stabilise this stretch: cysteine 27–cysteine 55, cysteine 35–cysteine 49, and cysteine 39–cysteine 56. Residues 72–95 (GNHWQSRRRNTQRKDKKQQTTVTS) are disordered. The span at 76–87 (QSRRRNTQRKDK) shows a compositional bias: basic residues.

This sequence belongs to the beta-defensin family.

The protein resides in the secreted. Its function is as follows. Has antibacterial activity. The chain is Beta-defensin 132 (DEFB132) from Pongo pygmaeus (Bornean orangutan).